We begin with the raw amino-acid sequence, 57 residues long: UPF0391 membrane protein RPE_2138 (57 aa).

The next 2 membrane-spanning stretches (helical) occupy residues 4-24 and 30-50; these read WVVT…GGIA and IAKI…VIGL.

This sequence belongs to the UPF0391 family.

Its subcellular location is the cell membrane. The polypeptide is UPF0391 membrane protein RPE_2138 (Rhodopseudomonas palustris (strain BisA53)).